The primary structure comprises 622 residues: V-type ATP synthase subunit I 1 (622 aa).

A run of 8 helical transmembrane segments spans residues 306-326, 328-348, 373-393, 428-448, 459-479, 485-505, 532-552, and 562-582; these read WVNLISPLMNFLGTVPGYWEV, ISGFFLLFFGVFFSIIFADAG, PAWCLGLYLGTLTMVWGALVC, QMHVCFFLGLLHLCLGHLIVV, AEFGSLLMLGGMYVVVLNLIV, PLTGMIVGSIIAGFVLNFIFV, VFADVMSYIRLWAVGLAGGAI, and PLFANFLAFLGIVLLLFGHGL.

The protein belongs to the V-ATPase 116 kDa subunit family.

Its subcellular location is the cell membrane. Its function is as follows. Produces ATP from ADP in the presence of a proton gradient across the membrane. This chain is V-type ATP synthase subunit I 1 (atpI1), found in Treponema pallidum (strain Nichols).